The following is a 398-amino-acid chain: Bone morphogenetic protein 2-A (398 aa).

The first 23 residues, 1 to 23, serve as a signal peptide directing secretion; it reads MVAGIHSLLLLLFYQVLLSGCTG. Positions 24–284 are excised as a propeptide; that stretch reads LIPEEGKRKY…GHALHKRQKR (261 aa). Asn-137, Asn-202, and Asn-340 each carry an N-linked (GlcNAc...) asparagine glycan. Disulfide bonds link Cys-298–Cys-363, Cys-327–Cys-395, and Cys-331–Cys-397.

It belongs to the TGF-beta family. As to quaternary structure, homodimer; disulfide-linked.

Its subcellular location is the secreted. Induces cartilage and bone formation. This chain is Bone morphogenetic protein 2-A (bmp2-a), found in Xenopus laevis (African clawed frog).